Reading from the N-terminus, the 152-residue chain is Large ribosomal subunit protein uL15 (152 aa).

The tract at residues 1–56 (MELNTLKPAKNSVKQNTRYGRGQGSGKGGTSTRGHKGAKSRSGYKSKPGFEGGQLP) is disordered. The segment covering 21-31 (RGQGSGKGGTS) has biased composition (gly residues). The span at 33-44 (RGHKGAKSRSGY) shows a compositional bias: basic residues.

This sequence belongs to the universal ribosomal protein uL15 family. As to quaternary structure, part of the 50S ribosomal subunit.

Functionally, binds to the 23S rRNA. The chain is Large ribosomal subunit protein uL15 from Amoebophilus asiaticus (strain 5a2).